Consider the following 78-residue polypeptide: Translational regulator CsrA (78 aa).

This sequence belongs to the CsrA/RsmA family. In terms of assembly, homodimer; the beta-strands of each monomer intercalate to form a hydrophobic core, while the alpha-helices form wings that extend away from the core.

Its subcellular location is the cytoplasm. In terms of biological role, a translational regulator that binds mRNA to regulate translation initiation and/or mRNA stability. Usually binds in the 5'-UTR at or near the Shine-Dalgarno sequence preventing ribosome-binding, thus repressing translation. Its main target seems to be the major flagellin gene, while its function is anatagonized by FliW. The chain is Translational regulator CsrA from Nitratidesulfovibrio vulgaris (strain ATCC 29579 / DSM 644 / CCUG 34227 / NCIMB 8303 / VKM B-1760 / Hildenborough) (Desulfovibrio vulgaris).